Here is a 158-residue protein sequence, read N- to C-terminus: NAD(P)H-quinone oxidoreductase subunit J, chloroplastic (158 aa).

Belongs to the complex I 30 kDa subunit family. NDH is composed of at least 16 different subunits, 5 of which are encoded in the nucleus.

It is found in the plastid. The protein resides in the chloroplast thylakoid membrane. It carries out the reaction a plastoquinone + NADH + (n+1) H(+)(in) = a plastoquinol + NAD(+) + n H(+)(out). It catalyses the reaction a plastoquinone + NADPH + (n+1) H(+)(in) = a plastoquinol + NADP(+) + n H(+)(out). In terms of biological role, NDH shuttles electrons from NAD(P)H:plastoquinone, via FMN and iron-sulfur (Fe-S) centers, to quinones in the photosynthetic chain and possibly in a chloroplast respiratory chain. The immediate electron acceptor for the enzyme in this species is believed to be plastoquinone. Couples the redox reaction to proton translocation, and thus conserves the redox energy in a proton gradient. The polypeptide is NAD(P)H-quinone oxidoreductase subunit J, chloroplastic (Oenothera argillicola (Appalachian evening primrose)).